Reading from the N-terminus, the 113-residue chain is U11-theraphotoxin-Hhn1a (113 aa).

An N-terminal signal peptide occupies residues 1-21 (MNTVRVTFLLVFVLAVSLGQA). Residues 22 to 74 (DKDENRMEMQEKTEQGKSYLDFAENLLLQKLEELEAKPLEEDSEESRNSRQKR) constitute a propeptide that is removed on maturation. Positions 57–69 (AKPLEEDSEESRN) are enriched in basic and acidic residues. The interval 57-83 (AKPLEEDSEESRNSRQKRCIGEGVPCD) is disordered. 3 disulfides stabilise this stretch: cysteine 75–cysteine 90, cysteine 82–cysteine 95, and cysteine 89–cysteine 110.

The protein belongs to the neurotoxin 14 (magi-1) family. 01 (HNTX-16) subfamily. In terms of tissue distribution, expressed by the venom gland.

It is found in the secreted. Its function is as follows. Probable ion channel inhibitor. The polypeptide is U11-theraphotoxin-Hhn1a (Cyriopagopus hainanus (Chinese bird spider)).